Here is a 340-residue protein sequence, read N- to C-terminus: 4-amino-5-hydroxymethyl-2-methylpyrimidine phosphate synthase THI12 (340 aa).

Lys62 bears the N6-(pyridoxal phosphate)lysine mark. His66 is an active-site residue. Residue 115 to 118 (GEFG) participates in pyridoxal 5'-phosphate binding. Residues 195–199 (CCCFC) carry the CCCFC; essential for catalytic activity, may be the site of iron coordination motif.

The protein belongs to the NMT1/THI5 family. Homodimer. Fe cation is required as a cofactor.

The catalysed reaction is N(6)-(pyridoxal phosphate)-L-lysyl-[4-amino-5-hydroxymethyl-2-methylpyrimidine phosphate synthase] + L-histidyl-[4-amino-5-hydroxymethyl-2-methylpyrimidine phosphate synthase] + 2 Fe(3+) + 4 H2O = L-lysyl-[4-amino-5-hydroxymethyl-2-methylpyrimidine phosphate synthase] + (2S)-2-amino-5-hydroxy-4-oxopentanoyl-[4-amino-5-hydroxymethyl-2-methylpyrimidine phosphate synthase] + 4-amino-2-methyl-5-(phosphooxymethyl)pyrimidine + 3-oxopropanoate + 2 Fe(2+) + 2 H(+). It functions in the pathway cofactor biosynthesis; thiamine diphosphate biosynthesis. Functionally, responsible for the formation of the pyrimidine heterocycle in the thiamine biosynthesis pathway. Catalyzes the formation of hydroxymethylpyrimidine phosphate (HMP-P) from histidine and pyridoxal phosphate (PLP). The protein uses PLP and the active site histidine to form HMP-P, generating an inactive enzyme. The enzyme can only undergo a single turnover, which suggests it is a suicide enzyme. The polypeptide is 4-amino-5-hydroxymethyl-2-methylpyrimidine phosphate synthase THI12 (Saccharomyces cerevisiae (strain ATCC 204508 / S288c) (Baker's yeast)).